We begin with the raw amino-acid sequence, 802 residues long: Leucine--tRNA ligase (802 aa).

A 'HIGH' region motif is present at residues 40–51 (PYPSGAGLHVGH). Residues 576–580 (KMSKS) carry the 'KMSKS' region motif. K579 lines the ATP pocket.

Belongs to the class-I aminoacyl-tRNA synthetase family.

Its subcellular location is the cytoplasm. It catalyses the reaction tRNA(Leu) + L-leucine + ATP = L-leucyl-tRNA(Leu) + AMP + diphosphate. The protein is Leucine--tRNA ligase of Bacillus cereus (strain B4264).